The following is a 31-amino-acid chain: Cliotide T10 (31 aa).

A cross-link (cyclopeptide (Gly-Asn)) is located at residues 1–31 (GIPCGESCVYIPCTVTALLGCSCKDKVCYKN). Disulfide bonds link C4-C21, C8-C23, and C13-C28.

Contains 3 disulfide bonds. In terms of processing, this is a cyclic peptide. Expressed in seed, root and nodule but not in flower, stem, shoot, leaf and pod (at protein level).

In terms of biological role, probably participates in a plant defense mechanism. In Clitoria ternatea (Butterfly pea), this protein is Cliotide T10.